Here is a 117-residue protein sequence, read N- to C-terminus: Holo-[acyl-carrier-protein] synthase (117 aa).

2 residues coordinate Mg(2+): Asp-8 and Glu-59.

Belongs to the P-Pant transferase superfamily. AcpS family. The cofactor is Mg(2+).

Its subcellular location is the cytoplasm. The enzyme catalyses apo-[ACP] + CoA = holo-[ACP] + adenosine 3',5'-bisphosphate + H(+). Its function is as follows. Transfers the 4'-phosphopantetheine moiety from coenzyme A to a Ser of acyl-carrier-protein. This Staphylococcus carnosus (strain TM300) protein is Holo-[acyl-carrier-protein] synthase.